The primary structure comprises 492 residues: Stomatal closure-related actin-binding protein 2 (492 aa).

Residues 112–132 adopt a coiled-coil conformation; it reads LKKLRDALETMRGRMDGRNRE.

Belongs to the SCAB family. In terms of tissue distribution, expressed in roots, stems, leaves, siliques and flowers.

It localises to the cytoplasm. The protein resides in the cytoskeleton. Probable plant-specific actin binding protein that bundles and stabilizes microfilaments (MFs). This Arabidopsis thaliana (Mouse-ear cress) protein is Stomatal closure-related actin-binding protein 2.